Here is a 553-residue protein sequence, read N- to C-terminus: Solute carrier family 22 member 12 (553 aa).

Residues 9–29 traverse the membrane as a helical segment; sequence LVGGLGRFQVLQTMALMVSIM. Residues Asn56 and Asn102 are each glycosylated (N-linked (GlcNAc...) asparagine). Transmembrane regions (helical) follow at residues 146–166, 174–194, 195–215, 232–252, 260–280, 351–371, 378–398, 407–427, 435–455, 466–486, and 495–515; these read PMAQ…CGPA, LVLT…AFAP, AFPV…GVMM, LVMT…AAVA, LLQL…WWLA, CIST…ALDL, IFLL…GALL, PTLA…TLVP, SALA…ITIY, MTAV…GPLV, and WLPL…ALLL. Phosphothreonine is present on Thr542.

Belongs to the major facilitator (TC 2.A.1) superfamily. Organic cation transporter (TC 2.A.1.19) family. Interacts with PDZK1. N-glycosylated. In terms of tissue distribution, detected in kidney (at protein level). Detected in fetal and adult kidney. Detected in epithelial cells of proximal tubules in renal cortex.

It is found in the apical cell membrane. It catalyses the reaction urate(out) + (S)-lactate(in) = urate(in) + (S)-lactate(out). The catalysed reaction is nicotinate(in) + urate(out) = nicotinate(out) + urate(in). It carries out the reaction urate(out) + n chloride(in) = urate(in) + n chloride(out). The enzyme catalyses orotate(out) + nicotinate(in) = orotate(in) + nicotinate(out). Its function is as follows. Electroneutral antiporter that translocates urate across the apical membrane of proximal tubular cells in exchange for monovalent organic or inorganic anions. Involved in renal reabsorption of urate and helps maintaining blood levels of uric acid. Mediates urate uptake by an exchange with organic anions such as (S)-lactate and nicotinate, and inorganic anion Cl(-). Other inorganic anions such as Br(-), I(-) and NO3(-) may also act as counteranions that exchange for urate. Also mediates orotate tubular uptake coupled with nicotinate efflux and to a lesser extent with lactate efflux, therefore displaying a potential role in orotate renal reabsorption. Orotate transport is Cl(-)-dependent. This Homo sapiens (Human) protein is Solute carrier family 22 member 12.